Consider the following 316-residue polypeptide: Methionyl-tRNA formyltransferase (316 aa).

(6S)-5,6,7,8-tetrahydrofolate is bound at residue S113–P116.

It belongs to the Fmt family.

It catalyses the reaction L-methionyl-tRNA(fMet) + (6R)-10-formyltetrahydrofolate = N-formyl-L-methionyl-tRNA(fMet) + (6S)-5,6,7,8-tetrahydrofolate + H(+). In terms of biological role, attaches a formyl group to the free amino group of methionyl-tRNA(fMet). The formyl group appears to play a dual role in the initiator identity of N-formylmethionyl-tRNA by promoting its recognition by IF2 and preventing the misappropriation of this tRNA by the elongation apparatus. This chain is Methionyl-tRNA formyltransferase, found in Sodalis glossinidius (strain morsitans).